Consider the following 217-residue polypeptide: Ribonuclease HII (217 aa).

Residues 26 to 215 enclose the RNase H type-2 domain; the sequence is EIVCGVDEAG…VREALDLMAG (190 aa). Residues Asp32, Glu33, and Asp124 each contribute to the a divalent metal cation site.

Belongs to the RNase HII family. Mn(2+) serves as cofactor. Mg(2+) is required as a cofactor.

The protein resides in the cytoplasm. It carries out the reaction Endonucleolytic cleavage to 5'-phosphomonoester.. Endonuclease that specifically degrades the RNA of RNA-DNA hybrids. The protein is Ribonuclease HII of Burkholderia ambifaria (strain ATCC BAA-244 / DSM 16087 / CCUG 44356 / LMG 19182 / AMMD) (Burkholderia cepacia (strain AMMD)).